Here is a 312-residue protein sequence, read N- to C-terminus: Taste receptor type 2 member 140 (312 aa).

The Extracellular segment spans residues 1-9; the sequence is MKVTVECAL. Residues 10-30 traverse the membrane as a helical segment; sequence LITLIVEIIIGCLGNGFIAVV. Topologically, residues 31–46 are cytoplasmic; the sequence is NIMDWTKRRRFSLVDQ. The helical transmembrane segment at 47-67 threads the bilayer; it reads ILTALAISRLAFVWSLLTVLV. Over 68–87 the chain is Extracellular; that stretch reads ISELHSSLLITRKMLRIINN. A helical membrane pass occupies residues 88-108; the sequence is FWTVTNHFSIWLATCLSIFYF. The Cytoplasmic segment spans residues 109–133; sequence LKIANFSNSIFLSLRWRVKTVVSLT. A helical transmembrane segment spans residues 134–154; the sequence is LLVSLLLLLVNVIIINTCIVI. Over 155–185 the chain is Extracellular; that stretch reads SVEGYKVNMSYSSHFNNNPQISRIPLFTNTM. Residue Asn162 is glycosylated (N-linked (GlcNAc...) asparagine). The helical transmembrane segment at 186–206 threads the bilayer; sequence FTFIPFTVTLTIFLLLIFSLW. Residues 207 to 229 lie on the Cytoplasmic side of the membrane; it reads RHLKKMQHRAKGPRDPSTTAHIK. A helical membrane pass occupies residues 230-250; it reads ALQMVVTFLFLYTIFFLALVM. Residues 251-264 lie on the Extracellular side of the membrane; sequence QAWNNEIQSKTVFN. A helical transmembrane segment spans residues 265–285; it reads LVFESIALAFPSGHSCVLILG. Residues 286 to 312 lie on the Cytoplasmic side of the membrane; that stretch reads NSKLRQAFLTIIWWLRSSFNAAELSSP.

It belongs to the G-protein coupled receptor T2R family.

It localises to the membrane. Putative taste receptor which may play a role in the perception of bitterness. The sequence is that of Taste receptor type 2 member 140 from Rattus norvegicus (Rat).